The following is a 3132-amino-acid chain: Toxin CdiA (3132 aa).

Residues 1–32 constitute a signal peptide (signal); that stretch reads MHQPPVRFTYRLLSYLVSAIIAGQPLLPAVGA. Residues 36–322 are two-partner system transport domain (TPS); sequence PQNGAGMDKA…AGGNLSVTGT (287 aa). Positions 351-1378 are FHA-1; the sequence is GELTAGQNAM…ITMNTAHLLN (1028 aa). Residues 1379 to 1635 are receptor-binding domain (RBD); that stretch reads SWDAISASHE…LSLSGASVSS (257 aa). The segment at 1636-1820 is YP domain; sequence YPLPSGNNGY…LSPEDITLHN (185 aa). The tract at residues 1821 to 1859 is periplasmic FHA-1 repeat (pFR); it reads GSVISGNNVQLAGGNITNSGSSINAQNDLLLDRTGSIDN. The tract at residues 1930 to 2526 is FHA-2; it reads RATDSLFMGA…QDSDRYDSRQ (597 aa). 2 disordered regions span residues 2195–2228 and 2456–2497; these read TGTG…STIG and AGIN…SGAQ. 2 stretches are compositionally biased toward polar residues: residues 2217–2228 and 2483–2497; these read GTTQSQSASTIG and VSLT…SGAQ. Residues 2862–2904 are pre-toxin (PT) domain; sequence DNLSEQERQQISMLATIASGIAGGLVGNSTSAAGTGAQAGRNS. The short motif at 2905 to 2908 is the VENN CT cleavage motif element; sequence VENN. A C-terminal effector domain (CT) region spans residues 2909 to 3121; the sequence is AMSGLEGFGT…IGTVTDYQIE (213 aa).

It in the N-terminal section; belongs to the CdiA toxin family. As to quaternary structure, probably interacts with cognate immunity protein CdiI. Post-translationally, expressed as 303 kDa protein which can be processed to 284 kDa and 195 kDa forms.

The protein resides in the secreted. Its subcellular location is the target cell. It localises to the target cell cytoplasm. In terms of biological role, toxic component of a toxin-immunity protein module, which functions as a cellular contact-dependent growth inhibition (CDI) system. CDI modules allow bacteria to communicate with and inhibit the growth of closely related neighboring bacteria (target cell counts decrease 1000- to 10(5)-fold) in a contact-dependent fashion. Inhibitory cells must be in logarithmic (not stationary) phase to inhibit growth of their targets, but protein synthesis is not necessary. The presence of P or S but not type 1 pili protects the target cells against growth inhibition for this CDI. BamA on the outer membrane of target cells acts as a receptor for CdiA, while target cell multidrug efflux pump AcrB facilitates its transport into the cytoplasm. Outer membrane receptor function is dependent on extracellular loops of BamA. Cells undergoing CDI show a 2- to 5-fold reversible decrease in aerobic respiration, proton motive force and steady-state ATP levels, suggesting this CT module is an ionophore that disrupts the target cell's inner cell membrane. Growth recovery requires an energy source. Cells expressing this protein in the absence of CdiI initially form filaments, some of which contain multiple nucleoids, while others are devoid of nucleoids. CDI cells induce the phage shock response, but pspA is not required for recovery from CDI. CDI is neutralized by its cognate immunity protein CdiI, but not by non-cognate CdiI from other bacteria with different CDI systems. Plays a role in biofilm formation, a region N-terminal to residue 644 is implicated in this receptor-independent cell adhesion. Functionally, the CdiA protein is thought to be exported from the cell through the central lumen of CdiB, the other half of its two-partner system (TPS). The TPS domain probably remains associated with CdiB while the FHA-1 domain forms an extended filament (33 nm long) with the receptor-binding domain (RBD) at its extremity; in the secretion arrested state the C-terminus of the RBD and YP domains form a hairpin-like structure as the FHA-2, PT and CT domains are periplasmic. The YP domain is probably responsible for this arrest at the point where it re-enters the host cell periplasm. Upon binding to a target cell outer membrane receptor (BamA for this CDI) a signal is transmitted to activate secretion. The filament becomes about 5 nm longer, the rest of CdiA is secreted and the FHA-2 domain becomes stably associated with the target cell's outer membrane where it facilitates entry of the toxic CT domain into the target cell periplasm. From there the toxic CT domain is cleaved and gains access to the target cell cytoplasm via an inner membrane protein (multidrug efflux pump AcrB for this CDI). This Escherichia coli protein is Toxin CdiA.